We begin with the raw amino-acid sequence, 241 residues long: NAD(P)H-quinone oxidoreductase subunit K (241 aa).

4 residues coordinate [4Fe-4S] cluster: C60, C61, C125, and C156. Residues 220 to 241 form a disordered region; that stretch reads SSQKEKITELPEKTEITNTEKD. Over residues 222–241 the composition is skewed to basic and acidic residues; the sequence is QKEKITELPEKTEITNTEKD.

It belongs to the complex I 20 kDa subunit family. NDH-1 can be composed of about 15 different subunits; different subcomplexes with different compositions have been identified which probably have different functions. It depends on [4Fe-4S] cluster as a cofactor.

It is found in the cellular thylakoid membrane. The enzyme catalyses a plastoquinone + NADH + (n+1) H(+)(in) = a plastoquinol + NAD(+) + n H(+)(out). It carries out the reaction a plastoquinone + NADPH + (n+1) H(+)(in) = a plastoquinol + NADP(+) + n H(+)(out). In terms of biological role, NDH-1 shuttles electrons from an unknown electron donor, via FMN and iron-sulfur (Fe-S) centers, to quinones in the respiratory and/or the photosynthetic chain. The immediate electron acceptor for the enzyme in this species is believed to be plastoquinone. Couples the redox reaction to proton translocation, and thus conserves the redox energy in a proton gradient. Cyanobacterial NDH-1 also plays a role in inorganic carbon-concentration. The sequence is that of NAD(P)H-quinone oxidoreductase subunit K from Prochlorococcus marinus (strain MIT 9215).